Reading from the N-terminus, the 561-residue chain is Proline--tRNA ligase (561 aa).

This sequence belongs to the class-II aminoacyl-tRNA synthetase family. ProS type 1 subfamily. In terms of assembly, homodimer.

Its subcellular location is the cytoplasm. It catalyses the reaction tRNA(Pro) + L-proline + ATP = L-prolyl-tRNA(Pro) + AMP + diphosphate. Functionally, catalyzes the attachment of proline to tRNA(Pro) in a two-step reaction: proline is first activated by ATP to form Pro-AMP and then transferred to the acceptor end of tRNA(Pro). As ProRS can inadvertently accommodate and process non-cognate amino acids such as alanine and cysteine, to avoid such errors it has two additional distinct editing activities against alanine. One activity is designated as 'pretransfer' editing and involves the tRNA(Pro)-independent hydrolysis of activated Ala-AMP. The other activity is designated 'posttransfer' editing and involves deacylation of mischarged Ala-tRNA(Pro). The misacylated Cys-tRNA(Pro) is not edited by ProRS. This chain is Proline--tRNA ligase, found in Thermosipho africanus (strain TCF52B).